The chain runs to 639 residues: Centromere protein T (639 aa).

Disordered regions lie at residues 1 to 64 (MDGR…RPNA), 266 to 294 (QLSDSKTSAQRSNTSYPAHEKARLEGLVS), 307 to 451 (SEKD…ERGT), 458 to 477 (AAEEEATDDESDKEDHESEE), and 494 to 534 (QPVL…TREP). Residues 12–23 (RAAPTPRVAVRS) are compositionally biased toward low complexity. The flexible stalk domain stretch occupies residues 80–500 (IIQNQPQVSP…YRPQPVLSPP (421 aa)). Residues 267–281 (LSDSKTSAQRSNTSY) are compositionally biased toward polar residues. Basic and acidic residues-rich tracts occupy residues 307 to 319 (SEKDLITDHEHVD), 329 to 338 (QGEEEQDHSQ), 356 to 371 (TEHHADAEYSEHSEKK), and 432 to 449 (PGAKPLKEAVEQTGEIER). Positions 458–469 (AAEEEATDDESD) are enriched in acidic residues.

The protein belongs to the CENP-T/CNN1 family. As to quaternary structure, component of the CENPA-CAD complex, composed of CENPI, CENPK, CENPL, CENPO, CENPP, CENPQ, CENPR and CENPS. The CENPA-CAD complex is probably recruited on centromeres by the CENPA-NAC complex, at least composed of CENPA, CENPC, CENPH, CENPM, CENPN, CENPT and CENPU. Identified in a centromeric complex containing histones H2A, H2B, H3 and H4, and at least CENPA, CENPB, CENPC, CENPT, CENPN, HJURP, SUPT16H, SSRP1 and RSF1. Interacts (via N-terminus) with the NDC80 complex. Heterodimer with CENPW; this dimer coassembles with CENPS-CENPX heterodimers at centromeres to form the tetrameric CENP-T-W-S-X complex.

Its subcellular location is the nucleus. It is found in the chromosome. The protein localises to the centromere. It localises to the kinetochore. Functionally, component of the CENPA-NAC (nucleosome-associated) complex, a complex that plays a central role in assembly of kinetochore proteins, mitotic progression and chromosome segregation. The CENPA-NAC complex recruits the CENPA-CAD (nucleosome distal) complex and may be involved in incorporation of newly synthesized CENPA into centromeres. Part of a nucleosome-associated complex that binds specifically to histone H3-containing nucleosomes at the centromere, as opposed to nucleosomes containing CENPA. Component of the heterotetrameric CENP-T-W-S-X complex that binds and supercoils DNA, and plays an important role in kinetochore assembly. CENPT has a fundamental role in kinetochore assembly and function. It is one of the inner kinetochore proteins, with most further proteins binding downstream. Required for normal chromosome organization and normal progress through mitosis. The chain is Centromere protein T (CENPT) from Gallus gallus (Chicken).